Consider the following 273-residue polypeptide: 4-hydroxy-tetrahydrodipicolinate reductase (273 aa).

NAD(+) is bound by residues 12-17 (GAGGRM) and Glu38. An NADP(+)-binding site is contributed by Arg39. NAD(+) contacts are provided by residues 102–104 (GTT) and 126–129 (AANF). His159 (proton donor/acceptor) is an active-site residue. His160 lines the (S)-2,3,4,5-tetrahydrodipicolinate pocket. Lys163 serves as the catalytic Proton donor. Residue 169 to 170 (GT) coordinates (S)-2,3,4,5-tetrahydrodipicolinate.

Belongs to the DapB family. As to quaternary structure, homotetramer.

Its subcellular location is the cytoplasm. The enzyme catalyses (S)-2,3,4,5-tetrahydrodipicolinate + NAD(+) + H2O = (2S,4S)-4-hydroxy-2,3,4,5-tetrahydrodipicolinate + NADH + H(+). It catalyses the reaction (S)-2,3,4,5-tetrahydrodipicolinate + NADP(+) + H2O = (2S,4S)-4-hydroxy-2,3,4,5-tetrahydrodipicolinate + NADPH + H(+). The protein operates within amino-acid biosynthesis; L-lysine biosynthesis via DAP pathway; (S)-tetrahydrodipicolinate from L-aspartate: step 4/4. Its function is as follows. Catalyzes the conversion of 4-hydroxy-tetrahydrodipicolinate (HTPA) to tetrahydrodipicolinate. The chain is 4-hydroxy-tetrahydrodipicolinate reductase from Shigella sonnei (strain Ss046).